Here is a 312-residue protein sequence, read N- to C-terminus: Malate dehydrogenase (312 aa).

NAD(+) is bound by residues 7–13 (GAAGGIG) and aspartate 34. The substrate site is built by arginine 81 and arginine 87. NAD(+) contacts are provided by residues asparagine 94 and 117–119 (ITN). Positions 119 and 153 each coordinate substrate. Histidine 177 (proton acceptor) is an active-site residue. Methionine 227 contributes to the NAD(+) binding site.

The protein belongs to the LDH/MDH superfamily. MDH type 1 family. As to quaternary structure, homodimer.

The catalysed reaction is (S)-malate + NAD(+) = oxaloacetate + NADH + H(+). Its function is as follows. Catalyzes the reversible oxidation of malate to oxaloacetate. This is Malate dehydrogenase from Salmonella gallinarum (strain 287/91 / NCTC 13346).